The following is a 512-amino-acid chain: Histidine ammonia-lyase (512 aa).

A cross-link (5-imidazolinone (Cys-Gly)) is located at residues 143-145; it reads CSG. Residue serine 144 is modified to 2,3-didehydroalanine (Ser).

Belongs to the PAL/histidase family. In terms of processing, contains an active site 4-methylidene-imidazol-5-one (MIO), which is formed autocatalytically by cyclization and dehydration of residues Cys-Ser-Gly.

It localises to the cytoplasm. The enzyme catalyses L-histidine = trans-urocanate + NH4(+). The protein operates within amino-acid degradation; L-histidine degradation into L-glutamate; N-formimidoyl-L-glutamate from L-histidine: step 1/3. The sequence is that of Histidine ammonia-lyase from Streptomyces avermitilis (strain ATCC 31267 / DSM 46492 / JCM 5070 / NBRC 14893 / NCIMB 12804 / NRRL 8165 / MA-4680).